The sequence spans 188 residues: Peptidyl-tRNA hydrolase (188 aa).

A tRNA-binding site is contributed by Phe15. His20 serves as the catalytic Proton acceptor. Residues Tyr64, Asn66, and Asn112 each contribute to the tRNA site.

Belongs to the PTH family. As to quaternary structure, monomer.

The protein localises to the cytoplasm. The catalysed reaction is an N-acyl-L-alpha-aminoacyl-tRNA + H2O = an N-acyl-L-amino acid + a tRNA + H(+). In terms of biological role, hydrolyzes ribosome-free peptidyl-tRNAs (with 1 or more amino acids incorporated), which drop off the ribosome during protein synthesis, or as a result of ribosome stalling. Functionally, catalyzes the release of premature peptidyl moieties from peptidyl-tRNA molecules trapped in stalled 50S ribosomal subunits, and thus maintains levels of free tRNAs and 50S ribosomes. The chain is Peptidyl-tRNA hydrolase from Borrelia turicatae (strain 91E135).